Reading from the N-terminus, the 745-residue chain is Cullin-2 (745 aa).

Lys-393 carries the N6-acetyllysine modification. Position 661 is a phosphothreonine (Thr-661). Positions 675 to 735 (DRKMYLQAAI…IDKQYIERSQ (61 aa)) constitute a Cullin neddylation domain. Lys-689 participates in a covalent cross-link: Glycyl lysine isopeptide (Lys-Gly) (interchain with G-Cter in NEDD8).

It belongs to the cullin family. Component of multiple Cul2-RING (CRL2) E3 ubiquitin-protein ligase complexes consisting of CUL2, Elongin BC (ELOB and ELOC), RBX1 and a variable substrate-specific adapter; this complex is also known as ECS (Elongin BC-CUL2/5-SOCS-box protein) complex and may consist of CUL2 or CUL5. Component of the ECS(VHL) or CBC(VHL) complex containing CUL2, RBX1, ELOB, ELOC and VHL. Component of the ECS(MED8) complex with the probable substrate recognition component MED8. Component of multiple ECS complexes part of the DesCEND (destruction via C-end degrons) pathway, which contain either KLHDC2, KLHDC3, KLHDC10, APPBP2, FEM1A, FEM1B or FEM1C as substrate-recognition component. Component of the ECS(LRR1) complex with the substrate recognition component LRR1. Component of a CRL2(FEM1B) complex containing CUL2, RBX1, ELOB, ELOC and FEM1B. Component of a CRL2(FEM1C) complex containing CUL2, RBX1, ELOB, ELOC and FEM1C. Part of an E3 ubiquitin-protein ligase complex including ZYG11B, CUL2 and Elongin BC. Part of an E3 ubiquitin-protein ligase complex including ZER1, CUL2 and Elongin BC. Interacts with RBX1, RNF7, FEM1B and TIP120A/CAND1. Found in a complex composed of LIMD1, VHL, EGLN1/PHD2, ELOB and CUL2. Interacts (when neddylated) with ARIH1; leading to activate the E3 ligase activity of ARIH1. Interacts (unneddylated form) with DCUN1D1, DCUN1D2, DCUN1D3, DCUN1D4 and DCUN1D5; these interactions promote the cullin neddylation. Component of VCB (elongins BC/CUL2/VHL) complex that contains at least DCUN1D1, CUL2 and VHL; this complex triggers CUL2 neddylation and consequently cullin ring ligase (CRL) substrates polyubiquitylation. Post-translationally, neddylated; which enhances the ubiquitination activity of ECS (Elongin BC-CUL2/5-SOCS-box protein) E3 ubiquitin-protein ligase complexes. Neddylation leads to structural rearrangment in the complex that allows interaction between the E2 ubiquitin-conjugating enzyme and the acceptor ubiquitin. CBC(VHL) complex formation seems to promote neddylation. Deneddylated via its interaction with the COP9 signalosome (CSN) complex.

Its subcellular location is the nucleus. It participates in protein modification; protein ubiquitination. Core component of multiple cullin-RING-based ECS (ElonginB/C-CUL2/5-SOCS-box protein) E3 ubiquitin-protein ligase complexes, which mediate the ubiquitination of target proteins. CUL2 may serve as a rigid scaffold in the complex and may contribute to catalysis through positioning of the substrate and the ubiquitin-conjugating enzyme. The E3 ubiquitin-protein ligase activity of the complex is dependent on the neddylation of the cullin subunit and is inhibited by the association of the deneddylated cullin subunit with TIP120A/CAND1. The functional specificity of the ECS complex depends on the substrate recognition component. ECS(VHL) mediates the ubiquitination of hypoxia-inducible factor (HIF). A number of ECS complexes (containing either KLHDC2, KLHDC3, KLHDC10, APPBP2, FEM1A, FEM1B or FEM1C as substrate-recognition component) are part of the DesCEND (destruction via C-end degrons) pathway, which recognizes a C-degron located at the extreme C terminus of target proteins, leading to their ubiquitination and degradation. ECS complexes and ARIH1 collaborate in tandem to mediate ubiquitination of target proteins. ECS(LRR1) ubiquitinates MCM7 and promotes CMG replisome disassembly by VCP and chromatin extraction during S-phase. This chain is Cullin-2 (CUL2), found in Pongo abelii (Sumatran orangutan).